Reading from the N-terminus, the 214-residue chain is UPF0056 membrane protein aq_540 (214 aa).

A run of 6 helical transmembrane segments spans residues Phe17 to Met37, Val47 to Gly67, Phe73 to Ala93, Leu122 to Leu142, Val153 to Ser173, and Ile185 to Val205.

This sequence belongs to the UPF0056 (MarC) family.

The protein localises to the cell membrane. This Aquifex aeolicus (strain VF5) protein is UPF0056 membrane protein aq_540.